Reading from the N-terminus, the 190-residue chain is Cytoglobin (190 aa).

Positions 1–21 are disordered; the sequence is MEKVPGDMEIERRERSEELSE. The region spanning 18 to 167 is the Globin domain; it reads ELSEAERKAV…IYSHVTAAYK (150 aa). A disulfide bridge links C38 with C83. 2 residues coordinate heme b: H81 and H113.

Belongs to the globin family. In terms of assembly, monomeric. Homodimer; disulfide-linked in vitro. Also homooligomeric in vitro. Post-translationally, the formation of an intramolecular disulfide bond between cysteines Cys-38 and Cys-83 specifically enhances the nitrite reductase activity. Expressed in brain and retina by non-neuronal cells (at protein level). This is the major globin expressed in vascular smooth muscle and is not present in the endothelium (at protein level).

It is found in the cytoplasm. The protein resides in the nucleus. The catalysed reaction is Fe(II)-heme b-[protein] + nitric oxide + O2 = Fe(III)-heme b-[protein] + nitrate. The enzyme catalyses 2 superoxide + 2 H(+) = H2O2 + O2. It carries out the reaction Fe(III)-heme b-[protein] + nitric oxide + H2O = Fe(II)-heme b-[protein] + nitrite + 2 H(+). It catalyses the reaction H2O2 + AH2 = A + 2 H2O. With respect to regulation, the nitric oxide dioxygenase activity is activated by a reducing system composed of cytochrome b5, its upstream reductase CYB5R3 and NADH. Functionally, probable multifunctional globin with a hexacoordinated heme iron required for the catalysis of various reactions depending on redox condition of the cell as well as oxygen availability. Has a nitric oxide dioxygenase (NOD) activity and is most probably involved in cell-mediated and oxygen-dependent nitric oxide consumption. By scavenging this second messenger may regulate several biological processes including endothelium-mediated vasodilation and vascular tone. Under normoxic conditions functions as a nitric oxide dioxygenase (NOD) but under hypoxic conditions the globin may switch its function to that of a nitrite (NO2) reductase (NiR), generating nitric oxide. Could also have peroxidase and superoxide dismutase activities, detoxifying reactive oxygen species and protecting cells against oxidative stress. Also binds dioxygen with low affinity and could function as an oxygen sensor but has probably no function as a respiratory oxygen carrier. This is Cytoglobin from Mus musculus (Mouse).